Reading from the N-terminus, the 114-residue chain is T cell receptor beta variable 6-1 (114 aa).

The N-terminal stretch at 1–21 (MSIGLLCCVAFSLLWASPVNA) is a signal peptide. Residues 22-114 (GVTQTPKFQV…TSVYFCASSE (93 aa)) enclose the Ig-like domain. Cysteines 42 and 110 form a disulfide. N84 carries an N-linked (GlcNAc...) asparagine glycan.

Alpha-beta TR is a heterodimer composed of an alpha and beta chain; disulfide-linked. The alpha-beta TR is associated with the transmembrane signaling CD3 coreceptor proteins to form the TR-CD3 (TcR or TCR). The assembly of alpha-beta TR heterodimers with CD3 occurs in the endoplasmic reticulum where a single alpha-beta TR heterodimer associates with one CD3D-CD3E heterodimer, one CD3G-CD3E heterodimer and one CD247 homodimer forming a stable octameric structure. CD3D-CD3E and CD3G-CD3E heterodimers preferentially associate with TR alpha and TR beta chains, respectively. The association of the CD247 homodimer is the last step of TcR assembly in the endoplasmic reticulum and is required for transport to the cell surface.

The protein resides in the cell membrane. In terms of biological role, v region of the variable domain of T cell receptor (TR) beta chain that participates in the antigen recognition. Alpha-beta T cell receptors are antigen specific receptors which are essential to the immune response and are present on the cell surface of T lymphocytes. Recognize peptide-major histocompatibility (MH) (pMH) complexes that are displayed by antigen presenting cells (APC), a prerequisite for efficient T cell adaptive immunity against pathogens. Binding of alpha-beta TR to pMH complex initiates TR-CD3 clustering on the cell surface and intracellular activation of LCK that phosphorylates the ITAM motifs of CD3G, CD3D, CD3E and CD247 enabling the recruitment of ZAP70. In turn ZAP70 phosphorylates LAT, which recruits numerous signaling molecules to form the LAT signalosome. The LAT signalosome propagates signal branching to three major signaling pathways, the calcium, the mitogen-activated protein kinase (MAPK) kinase and the nuclear factor NF-kappa-B (NF-kB) pathways, leading to the mobilization of transcription factors that are critical for gene expression and essential for T cell growth and differentiation. The T cell repertoire is generated in the thymus, by V-(D)-J rearrangement. This repertoire is then shaped by intrathymic selection events to generate a peripheral T cell pool of self-MH restricted, non-autoaggressive T cells. Post-thymic interaction of alpha-beta TR with the pMH complexes shapes TR structural and functional avidity. The chain is T cell receptor beta variable 6-1 from Homo sapiens (Human).